Consider the following 201-residue polypeptide: Myelomonocytic growth factor (201 aa).

The signal sequence occupies residues 1–23 (MCCLTPVLALALVLGAPWQALHG). 2 disulfide bridges follow: Cys61–Cys67 and Cys89–Cys99. N-linked (GlcNAc...) asparagine glycosylation is found at Asn123 and Asn137.

Belongs to the IL-6 superfamily.

Its subcellular location is the secreted. Functionally, hematopoietic growth factor that stimulates the proliferation and colony formation of normal and transformed avian cells of the myeloid lineage. This is Myelomonocytic growth factor from Gallus gallus (Chicken).